Reading from the N-terminus, the 130-residue chain is Small ribosomal subunit protein uS11 (130 aa).

Belongs to the universal ribosomal protein uS11 family. Part of the 30S ribosomal subunit. Interacts with proteins S7 and S18. Binds to IF-3.

Its function is as follows. Located on the platform of the 30S subunit, it bridges several disparate RNA helices of the 16S rRNA. Forms part of the Shine-Dalgarno cleft in the 70S ribosome. This Gluconacetobacter diazotrophicus (strain ATCC 49037 / DSM 5601 / CCUG 37298 / CIP 103539 / LMG 7603 / PAl5) protein is Small ribosomal subunit protein uS11.